A 518-amino-acid polypeptide reads, in one-letter code: Putative Rieske 2Fe-2S iron-sulfur protein MSMEG_6410/MSMEI_6242 (518 aa).

Residue lysine 375 forms an Isoglutamyl lysine isopeptide (Lys-Gln) (interchain with Q-Cter in protein Pup) linkage. Positions 431 to 518 (LYTFFKCLTD…KGHELRCQKL (88 aa)) constitute a Rieske domain. Positions 471, 473, 491, and 494 each coordinate [2Fe-2S] cluster.

[2Fe-2S] cluster is required as a cofactor.

The sequence is that of Putative Rieske 2Fe-2S iron-sulfur protein MSMEG_6410/MSMEI_6242 from Mycolicibacterium smegmatis (strain ATCC 700084 / mc(2)155) (Mycobacterium smegmatis).